The following is a 139-amino-acid chain: Large-conductance mechanosensitive channel (139 aa).

Helical transmembrane passes span 16-36 (VIDL…VKSL) and 79-99 (GAFV…FLLV).

Belongs to the MscL family. Homopentamer.

It is found in the cell inner membrane. In terms of biological role, channel that opens in response to stretch forces in the membrane lipid bilayer. May participate in the regulation of osmotic pressure changes within the cell. This chain is Large-conductance mechanosensitive channel, found in Caulobacter vibrioides (strain ATCC 19089 / CIP 103742 / CB 15) (Caulobacter crescentus).